A 435-amino-acid polypeptide reads, in one-letter code: Polyadenylate-binding protein RBP47B (435 aa).

Residues M1–G15 show a composition bias toward polar residues. 2 disordered regions span residues M1–M41 and Y85–G104. Positions Q29–M41 are enriched in low complexity. RRM domains are found at residues K108 to F188, L202 to P281, and A321 to S393. The interval R392–R412 is disordered.

This sequence belongs to the polyadenylate-binding RBP47 family. As to quaternary structure, interacts with the poly(A) tail of mRNA in nucleus. Expressed at low levels in leaves, stems, flowers, and seedlings.

The protein resides in the nucleus. It is found in the cytoplasmic granule. In terms of biological role, heterogeneous nuclear ribonucleoprotein (hnRNP)-protein binding the poly(A) tail of mRNA and probably involved in some steps of pre-mRNA maturation. This is Polyadenylate-binding protein RBP47B (RBP47B) from Arabidopsis thaliana (Mouse-ear cress).